Consider the following 164-residue polypeptide: Reticulon-like protein B22 (164 aa).

A Reticulon domain is found at M1–T164. 2 consecutive transmembrane segments (helical) span residues S30 to F50 and L117 to C137.

The protein resides in the endoplasmic reticulum membrane. In Arabidopsis thaliana (Mouse-ear cress), this protein is Reticulon-like protein B22 (RTNLB22).